We begin with the raw amino-acid sequence, 1227 residues long: ATP-dependent helicase/nuclease subunit A (1227 aa).

Residues 37–503 (QKRTAEQIEA…ILLKENFRSQ (467 aa)) form the UvrD-like helicase ATP-binding domain. 58 to 65 (ASAGSGKT) is an ATP binding site. The 285-residue stretch at 532-816 (SLVAGSPGQK…QLMTIHKSKG (285 aa)) folds into the UvrD-like helicase C-terminal domain.

Belongs to the helicase family. AddA subfamily. As to quaternary structure, heterodimer of AddA and AddB/RexB. Mg(2+) serves as cofactor.

It carries out the reaction Couples ATP hydrolysis with the unwinding of duplex DNA by translocating in the 3'-5' direction.. The catalysed reaction is ATP + H2O = ADP + phosphate + H(+). Functionally, the heterodimer acts as both an ATP-dependent DNA helicase and an ATP-dependent, dual-direction single-stranded exonuclease. Recognizes the chi site generating a DNA molecule suitable for the initiation of homologous recombination. The AddA nuclease domain is required for chi fragment generation; this subunit has the helicase and 3' -&gt; 5' nuclease activities. This is ATP-dependent helicase/nuclease subunit A from Streptococcus suis (strain 98HAH33).